A 187-amino-acid polypeptide reads, in one-letter code: UPF0301 protein Noc_0368 (187 aa).

The protein belongs to the UPF0301 (AlgH) family.

The sequence is that of UPF0301 protein Noc_0368 from Nitrosococcus oceani (strain ATCC 19707 / BCRC 17464 / JCM 30415 / NCIMB 11848 / C-107).